Reading from the N-terminus, the 283-residue chain is DegV domain-containing protein CPE0304 (283 aa).

The 279-residue stretch at 3–281 (VKVITDSTSC…VKSVGIAYAR (279 aa)) folds into the DegV domain. Hexadecanoate is bound by residues Ser-60 and Ser-92.

Its function is as follows. May bind long-chain fatty acids, such as palmitate, and may play a role in lipid transport or fatty acid metabolism. This chain is DegV domain-containing protein CPE0304, found in Clostridium perfringens (strain 13 / Type A).